The primary structure comprises 78 residues: Rubredoxin (78 aa).

Residues 23 to 74 (DARLECKICWWEYDPEVGDPVWQIAPGTSFSALPAHWRCPNCDGEAEQFMVL) enclose the Rubredoxin-like domain. Fe cation is bound by residues cysteine 28, cysteine 31, cysteine 61, and cysteine 64.

This sequence belongs to the rubredoxin family. Requires Fe(3+) as cofactor.

In terms of biological role, rubredoxin is a small nonheme, iron protein lacking acid-labile sulfide. Its single Fe, chelated to 4 Cys, functions as an electron acceptor and may also stabilize the conformation of the molecule. Could be involved in hydrogenase-linked redox processes. This Cupriavidus necator (strain ATCC 17699 / DSM 428 / KCTC 22496 / NCIMB 10442 / H16 / Stanier 337) (Ralstonia eutropha) protein is Rubredoxin (hoxR).